The following is a 191-amino-acid chain: uncharacterized protein (191 aa).

Residues 52 to 112 are disordered; that stretch reads NKQENQTESS…TNKDTNIETN (61 aa). Positions 57–70 are enriched in polar residues; the sequence is QTESSDLNNTDSLV. The span at 71-94 shows a compositional bias: low complexity; it reads DSNSDNQTNTTDTSTNNVENLNEN. Residues 138-172 adopt a coiled-coil conformation; sequence QDKISDTERIRFLEEKVSKLERKIRTLSLQMTKIS.

This is an uncharacterized protein from Acanthamoeba polyphaga mimivirus (APMV).